The primary structure comprises 122 residues: Large ribosomal subunit protein bL12 (122 aa).

Belongs to the bacterial ribosomal protein bL12 family. In terms of assembly, homodimer. Part of the ribosomal stalk of the 50S ribosomal subunit. Forms a multimeric L10(L12)X complex, where L10 forms an elongated spine to which 2 to 4 L12 dimers bind in a sequential fashion. Binds GTP-bound translation factors.

Its function is as follows. Forms part of the ribosomal stalk which helps the ribosome interact with GTP-bound translation factors. Is thus essential for accurate translation. The protein is Large ribosomal subunit protein bL12 of Xylella fastidiosa (strain M12).